The primary structure comprises 194 residues: Leucyl/phenylalanyl-tRNA--protein transferase (194 aa).

This sequence belongs to the L/F-transferase family.

The protein localises to the cytoplasm. It catalyses the reaction N-terminal L-lysyl-[protein] + L-leucyl-tRNA(Leu) = N-terminal L-leucyl-L-lysyl-[protein] + tRNA(Leu) + H(+). The enzyme catalyses N-terminal L-arginyl-[protein] + L-leucyl-tRNA(Leu) = N-terminal L-leucyl-L-arginyl-[protein] + tRNA(Leu) + H(+). The catalysed reaction is L-phenylalanyl-tRNA(Phe) + an N-terminal L-alpha-aminoacyl-[protein] = an N-terminal L-phenylalanyl-L-alpha-aminoacyl-[protein] + tRNA(Phe). Functions in the N-end rule pathway of protein degradation where it conjugates Leu, Phe and, less efficiently, Met from aminoacyl-tRNAs to the N-termini of proteins containing an N-terminal arginine or lysine. The protein is Leucyl/phenylalanyl-tRNA--protein transferase of Chlorobium phaeobacteroides (strain DSM 266 / SMG 266 / 2430).